Here is a 746-residue protein sequence, read N- to C-terminus: Chitin biosynthesis protein CHS6 (746 aa).

The tract at residues 1–25 (MNLFWPSETKKQNEIPGGDYTPGNS) is disordered. The CHS5-binding stretch occupies residues 734 to 746 (LAWIADLDHTVQP).

The protein belongs to the CHAPS family. Component of the CHS5/6 complex composed of the 4 CHAPS proteins BCH1, BCH2, BUD7, and CHS6 as well as at least CHS5 and GTP-bound ARF1. The complex interacts with the cargo protein CHS3.

It localises to the golgi apparatus. It is found in the trans-Golgi network membrane. In terms of biological role, member of the CHS5-ARF1P-binding proteins (CHAPS) which mediates export of specific cargo proteins, including chitin synthase CHS3. The sequence is that of Chitin biosynthesis protein CHS6 (CHS6) from Saccharomyces cerevisiae (strain ATCC 204508 / S288c) (Baker's yeast).